A 483-amino-acid polypeptide reads, in one-letter code: Regulatory protein ViaA (483 aa).

Belongs to the ViaA family. Homodimer. Interacts with RavA.

It localises to the cytoplasm. In terms of biological role, component of the RavA-ViaA chaperone complex, which may act on the membrane to optimize the function of some of the respiratory chains. ViaA stimulates the ATPase activity of RavA. The chain is Regulatory protein ViaA from Shigella boydii serotype 18 (strain CDC 3083-94 / BS512).